The chain runs to 312 residues: Beta-ketoacyl-[acyl-carrier-protein] synthase III 1 (312 aa).

Active-site residues include cysteine 113 and histidine 237. Residues 238–242 (QANIR) form an ACP-binding region. Residue asparagine 267 is part of the active site.

This sequence belongs to the thiolase-like superfamily. FabH family. As to quaternary structure, homodimer.

The protein resides in the cytoplasm. It catalyses the reaction malonyl-[ACP] + acetyl-CoA + H(+) = 3-oxobutanoyl-[ACP] + CO2 + CoA. Its pathway is lipid metabolism; fatty acid biosynthesis. Catalyzes the condensation reaction of fatty acid synthesis by the addition to an acyl acceptor of two carbons from malonyl-ACP. Catalyzes the first condensation reaction which initiates fatty acid synthesis and may therefore play a role in governing the total rate of fatty acid production. Possesses both acetoacetyl-ACP synthase and acetyl transacylase activities. Its substrate specificity determines the biosynthesis of branched-chain and/or straight-chain of fatty acids. This is Beta-ketoacyl-[acyl-carrier-protein] synthase III 1 from Halalkalibacterium halodurans (strain ATCC BAA-125 / DSM 18197 / FERM 7344 / JCM 9153 / C-125) (Bacillus halodurans).